The sequence spans 107 residues: Multidrug resistance protein mmr (107 aa).

The next 4 helical transmembrane spans lie at 2-19, 29-51, 58-80, and 84-106; these read IYLY…ATSL, LWPT…LSIS, VAYA…LFLG, and SVMK…LAGA.

Belongs to the drug/metabolite transporter (DMT) superfamily. Small multidrug resistance (SMR) (TC 2.A.7.1) family. Mmr subfamily.

The protein resides in the cell membrane. Multidrug efflux pump. Confers resistance to tetraphenylphosphonium (TPP), erythromycin, ethidium bromide, acriflavine, safranin O and pyronin Y. The polypeptide is Multidrug resistance protein mmr (mmr) (Mycobacterium bovis (strain ATCC BAA-935 / AF2122/97)).